We begin with the raw amino-acid sequence, 196 residues long: MQTLIESEFNAHLQSAQKIFTLTPAIQKAADILIQSLKNGGKILICGNGGSAADAQHFAAELTGRYKRERKGLAGIALSVDTSALTAIGNDYGFEYVFSRQVESLAQKGDVFFGISTSGNSHNVLKAAQIARDMDCFVIGLSGRDGGKLSALCDINLIMPDNDTPRIQELHILIIHILCDIIESECGENGNTNVIS.

Positions 33 to 192 constitute an SIS domain; the sequence is LIQSLKNGGK…ESECGENGNT (160 aa). 48–50 contributes to the substrate binding site; it reads NGG. The Zn(2+) site is built by H57 and E61. Residues E61, 90-91, 116-118, S121, and Q168 each bind substrate; these read ND and STS. Residues Q168 and H176 each coordinate Zn(2+).

The protein belongs to the SIS family. GmhA subfamily. Homotetramer. Zn(2+) serves as cofactor.

Its subcellular location is the cytoplasm. The enzyme catalyses 2 D-sedoheptulose 7-phosphate = D-glycero-alpha-D-manno-heptose 7-phosphate + D-glycero-beta-D-manno-heptose 7-phosphate. The protein operates within carbohydrate biosynthesis; D-glycero-D-manno-heptose 7-phosphate biosynthesis; D-glycero-alpha-D-manno-heptose 7-phosphate and D-glycero-beta-D-manno-heptose 7-phosphate from sedoheptulose 7-phosphate: step 1/1. Functionally, catalyzes the isomerization of sedoheptulose 7-phosphate in D-glycero-D-manno-heptose 7-phosphate. This Helicobacter hepaticus (strain ATCC 51449 / 3B1) protein is Phosphoheptose isomerase.